We begin with the raw amino-acid sequence, 78 residues long: Acyl carrier protein BQ2027_MB0103 (78 aa).

One can recognise a Carrier domain in the interval 1–78 (MRDRILAAVC…ELEAVCTEFG (78 aa)). S35 is modified (O-(pantetheine 4'-phosphoryl)serine).

It belongs to the acyl carrier protein (ACP) family. It depends on pantetheine 4'-phosphate as a cofactor.

It participates in lipid metabolism; fatty acid metabolism. Its function is as follows. Acyl-carrier protein (ACP) involved in the biosynthesis of a unique class of isonitrile lipopeptides (INLPs) that seem to play a role in metal acquisition. Is the dedicated ACP for the loading of activated acyl groups catalyzed by FadD10. The sequence is that of Acyl carrier protein BQ2027_MB0103 from Mycobacterium bovis (strain ATCC BAA-935 / AF2122/97).